The sequence spans 1454 residues: Probable cleavage and polyadenylation specificity factor subunit 1 (1454 aa).

The interval 810–843 (EEKEKKAKQTAAQEKEKETEKKKDDAKNEEDQVN) is disordered. A compositionally biased stretch (basic and acidic residues) spans 812 to 843 (KEKKAKQTAAQEKEKETEKKKDDAKNEEDQVN).

This sequence belongs to the CPSF1 family. In terms of assembly, CPSF is a heterotetramer composed of four distinct subunits 160 (cpsf-1), 100 (cpsf-2), 70 (cpsf-3), and 30 kDa (cpsf-4).

It is found in the nucleus. CPSF plays a key role in pre-mRNA 3'-end formation, recognizing the AAUAAA signal sequence and interacting with poly(A)polymerase and other factors to bring about cleavage and poly(A) addition. This subunit is involved in the RNA recognition step of the polyadenylation reaction. The polypeptide is Probable cleavage and polyadenylation specificity factor subunit 1 (Caenorhabditis briggsae).